Reading from the N-terminus, the 485-residue chain is Cobyric acid synthase (485 aa).

The GATase cobBQ-type domain occupies 248-435 (RLKVAVAVPP…LHGLFESPAA (188 aa)). Cys329 serves as the catalytic Nucleophile. His427 is a catalytic residue.

Belongs to the CobB/CobQ family. CobQ subfamily.

Its pathway is cofactor biosynthesis; adenosylcobalamin biosynthesis. In terms of biological role, catalyzes amidations at positions B, D, E, and G on adenosylcobyrinic A,C-diamide. NH(2) groups are provided by glutamine, and one molecule of ATP is hydrogenolyzed for each amidation. In Azotobacter vinelandii (strain DJ / ATCC BAA-1303), this protein is Cobyric acid synthase.